A 337-amino-acid polypeptide reads, in one-letter code: Serpentine receptor class beta-6 (337 aa).

The next 7 helical transmembrane spans lie at 20-40 (QFYTLLTSIFSVFPLLYLIIF), 62-82 (ILISVLNNCVVFAHHVVIPFL), 98-118 (IFQNIGVFGISCPMLTILGIT), 138-158 (IGVFIGVFAMLCDMALVYFFF), 183-203 (WLCYSLLAINSVNLVFNYFLV), 234-254 (TFISFIHVFFFSLYLIFTLII), and 273-293 (GVYITIPTYNLIIGIASCVIL).

It belongs to the nematode receptor-like protein srb family. In terms of tissue distribution, expressed in the ADL, ADF and ASH chemosensory neurons in the head and in the PHA and PHB chemosensory neurons in the tail. Low expression also observed in the egg-laying structures in the mid-body region.

The protein localises to the cell membrane. In terms of biological role, mediates recognition and avoidance of Streptomyces species by detecting dodecanoic acid secreted by the bacteria. Also mediates avoidance of decanoic acid which is not secreted by Streptomyces species but this may represent an additional important avoidance response in the environment. This is Serpentine receptor class beta-6 (srb-6) from Caenorhabditis elegans.